The sequence spans 329 residues: Nicotianamine synthase 8 (329 aa).

It belongs to the nicotianamine synthase (NAS)-like family. In terms of assembly, homotrimer.

The enzyme catalyses 3 S-adenosyl-L-methionine = nicotianamine + 3 S-methyl-5'-thioadenosine + 3 H(+). Its function is as follows. Synthesizes nicotianamine, a polyamine that is the first intermediate in the synthesis of the phytosiderophores of the mugineic acid type found in gramineae which serve as a sensor for the physiological iron status within the plant, and/or might be involved in the transport of iron. The chain is Nicotianamine synthase 8 (NAS8) from Hordeum vulgare (Barley).